Consider the following 298-residue polypeptide: ADP/ATP translocase 3 (298 aa).

Met-1 bears the N-acetylmethionine mark. Topologically, residues 1–7 (MTEQAIS) are mitochondrial intermembrane. Thr-2 is modified (N-acetylthreonine; in ADP/ATP translocase 3, N-terminally processed). A Solcar 1 repeat occupies 6–98 (ISFAKDFLAG…FAFKDKYKQI (93 aa)). A helical membrane pass occupies residues 8 to 37 (FAKDFLAGGIAAAISKTAVAPIERVKLLLQ). Residues 38–74 (VQHASKQIAADKQYKGIVDCIVRIPKEQGVLSFWRGN) lie on the Mitochondrial matrix side of the membrane. The residue at position 52 (Lys-52) is an N6,N6,N6-trimethyllysine. The helical transmembrane segment at 75 to 99 (LANVIRYFPTQALNFAFKDKYKQIF) threads the bilayer. ADP is bound by residues Arg-80 and Lys-92. Topologically, residues 100–109 (LGGVDKHTQF) are mitochondrial intermembrane. At Lys-105 the chain carries N6-acetyllysine. The chain crosses the membrane as a helical span at residues 110-130 (WRYFAGNLASGGAAGATSLCF). Solcar repeat units follow at residues 111–201 (RYFA…AKGM) and 212–297 (VSWM…LKKV). At 131 to 178 (VYPLDFARTRLAADVGKSGTEREFRGLGDCLVKITKSDGIRGLYQGFS) the chain is on the mitochondrial matrix side. The chain crosses the membrane as a helical span at residues 179–199 (VSVQGIIIYRAAYFGVYDTAK). The Mitochondrial intermembrane segment spans residues 200 to 210 (GMLPDPKNTHI). Residues 211–231 (VVSWMIAQTVTAVAGVVSYPF) form a helical membrane-spanning segment. The Mitochondrial matrix segment spans residues 232 to 273 (DTVRRRMMMQSGRKGADIMYTGTVDCWRKIFRDEGGKAFFKG). ADP is bound at residue Arg-235. The tract at residues 235–240 (RRRMMM) is important for transport activity. The short motif at 235–240 (RRRMMM) is the Nucleotide carrier signature motif element. Lys-268 is modified (N6-acetyllysine). A helical membrane pass occupies residues 274–291 (AWSNVLRGMGGAFVLVLY). The Mitochondrial intermembrane portion of the chain corresponds to 292 to 298 (DELKKVI).

It belongs to the mitochondrial carrier (TC 2.A.29) family. As to quaternary structure, monomer. Found in a complex with ARL2, ARL2BP and SLC25A6/ANT3. (Microbial infection) Interacts with influenza A virus PB1-F2 protein. In terms of assembly, (Microbial infection) Interacts with HIV-1 Vpr. Post-translationally, trimethylated by ANTKMT at Lys-52. As to expression, expressed in erythrocytes (at protein level).

Its subcellular location is the mitochondrion inner membrane. The protein localises to the membrane. The catalysed reaction is ADP(in) + ATP(out) = ADP(out) + ATP(in). It carries out the reaction H(+)(in) = H(+)(out). Its activity is regulated as follows. The matrix-open state (m-state) is inhibited by the membrane-permeable bongkrekic acid (BKA). The cytoplasmic-open state (c-state) is inhibited by the membrane-impermeable toxic inhibitor carboxyatractyloside (CATR). Proton transporter activity is inhibited by ADP:ATP antiporter activity. ADP:ATP antiporter that mediates import of ADP into the mitochondrial matrix for ATP synthesis, and export of ATP out to fuel the cell. Cycles between the cytoplasmic-open state (c-state) and the matrix-open state (m-state): operates by the alternating access mechanism with a single substrate-binding site intermittently exposed to either the cytosolic (c-state) or matrix (m-state) side of the inner mitochondrial membrane. In addition to its ADP:ATP antiporter activity, also involved in mitochondrial uncoupling and mitochondrial permeability transition pore (mPTP) activity. Plays a role in mitochondrial uncoupling by acting as a proton transporter: proton transport uncouples the proton flows via the electron transport chain and ATP synthase to reduce the efficiency of ATP production and cause mitochondrial thermogenesis. Proton transporter activity is inhibited by ADP:ATP antiporter activity, suggesting that SLC25A6/ANT3 acts as a master regulator of mitochondrial energy output by maintaining a delicate balance between ATP production (ADP:ATP antiporter activity) and thermogenesis (proton transporter activity). Proton transporter activity requires free fatty acids as cofactor, but does not transport it. Also plays a key role in mPTP opening, a non-specific pore that enables free passage of the mitochondrial membranes to solutes of up to 1.5 kDa, and which contributes to cell death. It is however unclear if SLC25A6/ANT3 constitutes a pore-forming component of mPTP or regulates it. In Homo sapiens (Human), this protein is ADP/ATP translocase 3.